A 210-amino-acid chain; its full sequence is Ribosomal RNA small subunit methyltransferase G (210 aa).

S-adenosyl-L-methionine-binding positions include Gly77, Phe82, Glu100 to Ser102, Val128 to Glu129, and Arg141.

Belongs to the methyltransferase superfamily. RNA methyltransferase RsmG family.

It localises to the cytoplasm. Functionally, specifically methylates the N7 position of a guanine in 16S rRNA. The protein is Ribosomal RNA small subunit methyltransferase G of Borrelia duttonii (strain Ly).